A 570-amino-acid polypeptide reads, in one-letter code: Periplasmic trehalase (570 aa).

The signal sequence occupies residues 1 to 34; the sequence is MIPPEIRRSVLLQKAIKLALAGTLLTFASFSATA. Substrate is bound by residues Arg-159, 166-167, Asn-203, 212-214, 284-286, and Gly-317; these read WD, RSQ, and RPE. Residues Asp-319 and Glu-503 each act as proton donor/acceptor in the active site. Residue Glu-518 participates in substrate binding. The segment at 544–570 is disordered; sequence KPCDSVPSTRPASLSATPTKTPSAATQ. The segment covering 554–570 has biased composition (low complexity); the sequence is PASLSATPTKTPSAATQ.

This sequence belongs to the glycosyl hydrolase 37 family. In terms of assembly, monomer.

The protein resides in the periplasm. The catalysed reaction is alpha,alpha-trehalose + H2O = alpha-D-glucose + beta-D-glucose. Provides the cells with the ability to utilize trehalose at high osmolarity by splitting it into glucose molecules that can subsequently be taken up by the phosphotransferase-mediated uptake system. The chain is Periplasmic trehalase from Salmonella paratyphi B (strain ATCC BAA-1250 / SPB7).